We begin with the raw amino-acid sequence, 1249 residues long: AMB antimetabolite synthetase AmbB (1249 aa).

Residues 245 to 633 are adenylation; sequence FEAQARRTPQ…LGRLDDQVKF (389 aa). Residues 716-735 are disordered; it reads IDRKALPRPQATGAEPQALP. The Carrier domain maps to 734 to 809; that stretch reads LPSDPLEQAL…ALLELLRQAA (76 aa). An O-(pantetheine 4'-phosphoryl)serine modification is found at serine 768. The segment at 823-1150 is condensation; that stretch reads GLSLAERRLW…CVTQALRQRG (328 aa).

It belongs to the NRP synthetase family. It depends on pantetheine 4'-phosphate as a cofactor.

It catalyses the reaction holo-[peptidyl-carrier protein] + L-alanine + ATP = L-alanyl-[peptidyl-carrier protein] + AMP + diphosphate. In terms of biological role, involved in the biosynthesis of the antimetabolite L-2-amino-4-methoxy-trans-3-butenoic acid (AMB), a non-proteinogenic amino acid which is toxic for prokaryotes and eukaryotes. Adenylates L-alanine and loads it onto its peptidyl carrier domain via a thioester linkage to the phosphopanthetheine moiety. In addition, loads activated L-Ala in trans onto the second carrier domain of AmbE. Can also activate L-Ser, Gly and D-Ala, albeit to a lower extent. The condensation domain of AmbB probably condenses the activated L-Ala and the L-Glu loaded on AmbE to form a L-Glu-L-Ala dipeptide at the first carrier domain of AmbE. The polypeptide is AMB antimetabolite synthetase AmbB (Pseudomonas aeruginosa (strain ATCC 15692 / DSM 22644 / CIP 104116 / JCM 14847 / LMG 12228 / 1C / PRS 101 / PAO1)).